Reading from the N-terminus, the 492-residue chain is Catalase-3 (492 aa).

Residues His65 and Asn138 contribute to the active site. Tyr348 serves as a coordination point for heme.

The protein belongs to the catalase family. In terms of assembly, homotetramer and heterotetramer. At least six or seven isozymes are produced from a mixture of 3 gene products. Interacts with NCA1. Interacts with LSD1. It depends on heme as a cofactor.

Its subcellular location is the peroxisome. It carries out the reaction 2 H2O2 = O2 + 2 H2O. Functionally, occurs in almost all aerobically respiring organisms and serves to protect cells from the toxic effects of hydrogen peroxide. The polypeptide is Catalase-3 (CAT3) (Arabidopsis thaliana (Mouse-ear cress)).